A 144-amino-acid polypeptide reads, in one-letter code: Large ribosomal subunit protein uL13 (144 aa).

Belongs to the universal ribosomal protein uL13 family. In terms of assembly, part of the 50S ribosomal subunit.

Its function is as follows. This protein is one of the early assembly proteins of the 50S ribosomal subunit, although it is not seen to bind rRNA by itself. It is important during the early stages of 50S assembly. This Mesomycoplasma hyopneumoniae (strain 7448) (Mycoplasma hyopneumoniae) protein is Large ribosomal subunit protein uL13.